Here is a 91-residue protein sequence, read N- to C-terminus: Acylphosphatase (91 aa).

The Acylphosphatase-like domain occupies 3–91 (TVTMRVTGLV…EKFTRFSVVY (89 aa)). Catalysis depends on residues arginine 18 and asparagine 36.

It belongs to the acylphosphatase family.

It carries out the reaction an acyl phosphate + H2O = a carboxylate + phosphate + H(+). The protein is Acylphosphatase (acyP) of Lactobacillus johnsonii (strain CNCM I-12250 / La1 / NCC 533).